We begin with the raw amino-acid sequence, 686 residues long: tRNA wybutosine-synthesizing protein 4 (686 aa).

Residues 1 to 22 (MGPRSRQRRTGTVQSTNDSSSL) are disordered. The segment covering 10–22 (TGTVQSTNDSSSL) has biased composition (polar residues). S-adenosyl-L-methionine-binding positions include Arg59, Gly89, Asp114, 161 to 162 (DL), and Glu188.

This sequence belongs to the methyltransferase superfamily. LCMT family. Interacts with RNF144B/IBRDC2.

The enzyme catalyses 7-[(3S)-3-amino-3-carboxypropyl]wyosine(37) in tRNA(Phe) + S-adenosyl-L-methionine = 7-[(3S)-(3-amino-3-methoxycarbonyl)propyl]wyosine(37) in tRNA(Phe) + S-adenosyl-L-homocysteine. It carries out the reaction 7-[(3S)-(3-amino-3-methoxycarbonyl)propyl]wyosine(37) in tRNA(Phe) + S-adenosyl-L-methionine + CO2 = wybutosine(37) in tRNA(Phe) + S-adenosyl-L-homocysteine + 2 H(+). The protein operates within tRNA modification; wybutosine-tRNA(Phe) biosynthesis. Probable S-adenosyl-L-methionine-dependent methyltransferase that acts as a component of the wybutosine biosynthesis pathway. Wybutosine is a hyper modified guanosine with a tricyclic base found at the 3'-position adjacent to the anticodon of eukaryotic phenylalanine tRNA. May methylate the carboxyl group of leucine residues to form alpha-leucine ester residues. In Rattus norvegicus (Rat), this protein is tRNA wybutosine-synthesizing protein 4 (Lcmt2).